Reading from the N-terminus, the 213-residue chain is NADH-quinone oxidoreductase subunit I (213 aa).

4Fe-4S ferredoxin-type domains lie at 74–103 (RFIE…METS) and 113–142 (ENYS…HGTE). Residues Cys-83, Cys-86, Cys-89, Cys-93, Cys-122, Cys-125, Cys-128, and Cys-132 each coordinate [4Fe-4S] cluster.

Belongs to the complex I 23 kDa subunit family. In terms of assembly, NDH-1 is composed of 14 different subunits. Subunits NuoA, H, J, K, L, M, N constitute the membrane sector of the complex. The cofactor is [4Fe-4S] cluster.

The protein resides in the cell inner membrane. The catalysed reaction is a quinone + NADH + 5 H(+)(in) = a quinol + NAD(+) + 4 H(+)(out). Functionally, NDH-1 shuttles electrons from NADH, via FMN and iron-sulfur (Fe-S) centers, to quinones in the respiratory chain. The immediate electron acceptor for the enzyme in this species is believed to be ubiquinone. Couples the redox reaction to proton translocation (for every two electrons transferred, four hydrogen ions are translocated across the cytoplasmic membrane), and thus conserves the redox energy in a proton gradient. This chain is NADH-quinone oxidoreductase subunit I, found in Campylobacter jejuni subsp. jejuni serotype O:23/36 (strain 81-176).